The primary structure comprises 651 residues: DNA mismatch repair protein MutL (651 aa).

Residues 336 to 398 form a disordered region; it reads RLDMTEPETG…ANSGYQPENP (63 aa). A compositionally biased stretch (polar residues) spans 385-394; sequence ARESANSGYQ.

The protein belongs to the DNA mismatch repair MutL/HexB family.

In terms of biological role, this protein is involved in the repair of mismatches in DNA. It is required for dam-dependent methyl-directed DNA mismatch repair. May act as a 'molecular matchmaker', a protein that promotes the formation of a stable complex between two or more DNA-binding proteins in an ATP-dependent manner without itself being part of a final effector complex. The chain is DNA mismatch repair protein MutL from Pectobacterium atrosepticum (strain SCRI 1043 / ATCC BAA-672) (Erwinia carotovora subsp. atroseptica).